We begin with the raw amino-acid sequence, 164 residues long: MFKNTFQSGFLSILYSIGSKPLQIWDKKVRNGHIKRITDNDIQSLVLEIEGTNVSTTYITCPADPKKTLGIKLPFLVMIIKNLKKYFTFEVQVLDDKNVRRRFRASNYQSTTRVKPFICTMPMRLDDGWNQIQFNLSDFTRRAYDPCKLSYPKGLLLRQTLLRG.

It belongs to the CFAP20 family. Microtubule inner protein component of sperm flagellar doublet microtubules.

It is found in the nucleus. It localises to the cytoplasm. The protein localises to the cytoskeleton. The protein resides in the microtubule organizing center. Its subcellular location is the centrosome. It is found in the centriole. It localises to the cilium basal body. The protein localises to the cilium axoneme. The protein resides in the flagellum axoneme. Cilium- and flagellum-specific protein that plays a role in axonemal structure organization and motility. Microtubule inner protein (MIP) part of the dynein-decorated doublet microtubules (DMTs) in cilia axoneme, which is required for motile cilia beating. Involved in the regulation of the size and morphology of cilia. Required for axonemal microtubules polyglutamylation. The sequence is that of Cilia- and flagella-associated protein 20 (Cfap20) from Rattus norvegicus (Rat).